Here is a 334-residue protein sequence, read N- to C-terminus: Aspartate carbamoyltransferase catalytic subunit (334 aa).

Carbamoyl phosphate is bound by residues R71 and T72. L-aspartate is bound at residue K99. The carbamoyl phosphate site is built by R121, H151, and Q154. 2 residues coordinate L-aspartate: R184 and R239. The carbamoyl phosphate site is built by G280 and P281.

This sequence belongs to the aspartate/ornithine carbamoyltransferase superfamily. ATCase family. Heterododecamer (2C3:3R2) of six catalytic PyrB chains organized as two trimers (C3), and six regulatory PyrI chains organized as three dimers (R2).

The catalysed reaction is carbamoyl phosphate + L-aspartate = N-carbamoyl-L-aspartate + phosphate + H(+). It functions in the pathway pyrimidine metabolism; UMP biosynthesis via de novo pathway; (S)-dihydroorotate from bicarbonate: step 2/3. Its function is as follows. Catalyzes the condensation of carbamoyl phosphate and aspartate to form carbamoyl aspartate and inorganic phosphate, the committed step in the de novo pyrimidine nucleotide biosynthesis pathway. The sequence is that of Aspartate carbamoyltransferase catalytic subunit from Pseudomonas syringae pv. tomato (strain ATCC BAA-871 / DC3000).